The sequence spans 261 residues: Ribosomal RNA small subunit methyltransferase J (261 aa).

S-adenosyl-L-methionine contacts are provided by residues 101-102 (RD), 117-118 (ER), 153-154 (SS), and aspartate 176.

Belongs to the methyltransferase superfamily. RsmJ family.

Its subcellular location is the cytoplasm. It catalyses the reaction guanosine(1516) in 16S rRNA + S-adenosyl-L-methionine = N(2)-methylguanosine(1516) in 16S rRNA + S-adenosyl-L-homocysteine + H(+). Specifically methylates the guanosine in position 1516 of 16S rRNA. The chain is Ribosomal RNA small subunit methyltransferase J from Vibrio cholerae serotype O1 (strain ATCC 39315 / El Tor Inaba N16961).